The primary structure comprises 111 residues: UPF0060 membrane protein Krad_3114 (111 aa).

The next 4 helical transmembrane spans lie at 7–27 (IALFVLAALLEIGGAWLVWQG), 33–53 (GLAWIGAGVIALGLYGFAATL), 62–82 (VLAAYGGVFVAGSLLWAAVVD), and 88–108 (RFDVAGALVCLVGVGIVMYAP).

It belongs to the UPF0060 family.

Its subcellular location is the cell membrane. This chain is UPF0060 membrane protein Krad_3114, found in Kineococcus radiotolerans (strain ATCC BAA-149 / DSM 14245 / SRS30216).